The primary structure comprises 201 residues: MRTGEVHRHTGETDVKVKLDLDGSGCCEASTGVPFLDHMLNQISSHGLIDLTITAVGDTHIDDHHTNEDVGIAVGQALSQALGDRKGIHRFGHFVAPLDEALVQVALDCSGRPHISYGLTIPTQKIGSYDTELVKEFFVAVANNSGLTLHIRQLDGVNSHHIVEACFKAFARALRMATEIDPRRAGAIPSSKGVLEQAGAN.

Belongs to the imidazoleglycerol-phosphate dehydratase family.

The protein localises to the cytoplasm. The enzyme catalyses D-erythro-1-(imidazol-4-yl)glycerol 3-phosphate = 3-(imidazol-4-yl)-2-oxopropyl phosphate + H2O. The protein operates within amino-acid biosynthesis; L-histidine biosynthesis; L-histidine from 5-phospho-alpha-D-ribose 1-diphosphate: step 6/9. The protein is Imidazoleglycerol-phosphate dehydratase of Synechococcus sp. (strain CC9902).